The sequence spans 442 residues: Yes-associated protein homolog 1 (442 aa).

Residues methionine 1–histidine 10 show a composition bias toward basic residues. The segment at methionine 1–alanine 84 is disordered. 2 stretches are compositionally biased toward polar residues: residues asparagine 13–serine 22 and leucine 55–histidine 71. A Phosphoserine modification is found at serine 104. A compositionally biased stretch (polar residues) spans leucine 108–threonine 120. Residues leucine 108 to serine 136 are disordered. Residues proline 124–serine 134 are compositionally biased toward basic residues. The 34-residue stretch at leucine 203 to leucine 236 folds into the WW domain.

It belongs to the YAP1 family. Highly divergent. Interacts (via WW domain) with wts-1 (via N-terminus). Interacts (via WW domain) with egl-44; the interaction may regulate transcription. Expressed in epithelia, hypodermis, muscles, pharynx, intestine, gonadal sheath cells, vulva, spermatheca and in excretory tissue.

Its subcellular location is the cytoplasm. It is found in the nucleus. The protein localises to the cell projection. The protein resides in the cilium. It localises to the cytoskeleton. Its subcellular location is the cilium axoneme. Its function is as follows. Plays a role in thermal stress response and in aging. This is Yes-associated protein homolog 1 from Caenorhabditis elegans.